The sequence spans 138 residues: Acidic phospholipase A2 Ts-A6 (138 aa).

The N-terminal stretch at 1 to 16 is a signal peptide; it reads MRALWIMAVLLLGVEG. Intrachain disulfides connect cysteine 42-cysteine 131, cysteine 44-cysteine 60, cysteine 59-cysteine 111, cysteine 65-cysteine 138, cysteine 66-cysteine 104, cysteine 73-cysteine 97, and cysteine 91-cysteine 102. Positions 43, 45, and 47 each coordinate Ca(2+). Residue histidine 63 is part of the active site. Aspartate 64 serves as a coordination point for Ca(2+). Aspartate 105 is a catalytic residue.

Ca(2+) is required as a cofactor. As to expression, expressed by the venom gland.

Its subcellular location is the secreted. The enzyme catalyses a 1,2-diacyl-sn-glycero-3-phosphocholine + H2O = a 1-acyl-sn-glycero-3-phosphocholine + a fatty acid + H(+). In terms of biological role, snake venom phospholipase A2 (PLA2) that shows a moderate inhibition of ADP-induced human platelet aggregation when tested on platelet rich plasma. Exhibits high hydrolytic activities and prefers the anionic micelles (dPPC with deoxycholate) to the zwitterionic micelles (dPPC with Triton X-100). PLA2 catalyzes the calcium-dependent hydrolysis of the 2-acyl groups in 3-sn-phosphoglycerides. This is Acidic phospholipase A2 Ts-A6 from Trimeresurus stejnegeri (Chinese green tree viper).